Here is a 95-residue protein sequence, read N- to C-terminus: Pyrimidine/purine nucleoside phosphorylase (95 aa).

Belongs to the nucleoside phosphorylase PpnP family.

It catalyses the reaction a purine D-ribonucleoside + phosphate = a purine nucleobase + alpha-D-ribose 1-phosphate. It carries out the reaction adenosine + phosphate = alpha-D-ribose 1-phosphate + adenine. The catalysed reaction is cytidine + phosphate = cytosine + alpha-D-ribose 1-phosphate. The enzyme catalyses guanosine + phosphate = alpha-D-ribose 1-phosphate + guanine. It catalyses the reaction inosine + phosphate = alpha-D-ribose 1-phosphate + hypoxanthine. It carries out the reaction thymidine + phosphate = 2-deoxy-alpha-D-ribose 1-phosphate + thymine. The catalysed reaction is uridine + phosphate = alpha-D-ribose 1-phosphate + uracil. The enzyme catalyses xanthosine + phosphate = alpha-D-ribose 1-phosphate + xanthine. Its function is as follows. Catalyzes the phosphorolysis of diverse nucleosides, yielding D-ribose 1-phosphate and the respective free bases. Can use uridine, adenosine, guanosine, cytidine, thymidine, inosine and xanthosine as substrates. Also catalyzes the reverse reactions. In Yersinia enterocolitica serotype O:8 / biotype 1B (strain NCTC 13174 / 8081), this protein is Pyrimidine/purine nucleoside phosphorylase.